Reading from the N-terminus, the 213-residue chain is Ribonuclease HII (213 aa).

The RNase H type-2 domain occupies 20-209 (ELVAGVDEVG…VRQAYEALEG (190 aa)). A divalent metal cation contacts are provided by D26, E27, and D118.

Belongs to the RNase HII family. Mn(2+) is required as a cofactor. Mg(2+) serves as cofactor.

It is found in the cytoplasm. It catalyses the reaction Endonucleolytic cleavage to 5'-phosphomonoester.. Endonuclease that specifically degrades the RNA of RNA-DNA hybrids. In Pseudomonas fluorescens (strain Pf0-1), this protein is Ribonuclease HII.